The sequence spans 234 residues: Glycerol uptake facilitator protein (234 aa).

6 helical membrane-spanning segments follow: residues 9-29, 37-57, 61-81, 83-103, 135-155, and 159-179; these read FLGT…VVLP, GWIV…FVSG, PAHL…LPWA, VLPY…LVWL, LISE…LGLY, and AGIG…SLGG. Residues 65-67 carry the NPA 1 motif; it reads NPA. Residues 186-188 carry the NPA 2 motif; that stretch reads NPA. A helical transmembrane segment spans residues 214-234; that stretch reads WIPVVGPVIGAALAVLVFSLF.

Belongs to the MIP/aquaporin (TC 1.A.8) family.

The protein resides in the cell membrane. The catalysed reaction is glycerol(in) = glycerol(out). Its function is as follows. Mediates glycerol diffusion across the cytoplasmic membrane via a pore-type mechanism. The sequence is that of Glycerol uptake facilitator protein (glpF) from Streptococcus pneumoniae (strain ATCC BAA-255 / R6).